We begin with the raw amino-acid sequence, 236 residues long: 1-(5-phosphoribosyl)-5-[(5-phosphoribosylamino)methylideneamino] imidazole-4-carboxamide isomerase (236 aa).

Catalysis depends on aspartate 8, which acts as the Proton acceptor. The active-site Proton donor is aspartate 129.

The protein belongs to the HisA/HisF family.

The protein resides in the cytoplasm. The enzyme catalyses 1-(5-phospho-beta-D-ribosyl)-5-[(5-phospho-beta-D-ribosylamino)methylideneamino]imidazole-4-carboxamide = 5-[(5-phospho-1-deoxy-D-ribulos-1-ylimino)methylamino]-1-(5-phospho-beta-D-ribosyl)imidazole-4-carboxamide. The protein operates within amino-acid biosynthesis; L-histidine biosynthesis; L-histidine from 5-phospho-alpha-D-ribose 1-diphosphate: step 4/9. This chain is 1-(5-phosphoribosyl)-5-[(5-phosphoribosylamino)methylideneamino] imidazole-4-carboxamide isomerase, found in Ruminiclostridium cellulolyticum (strain ATCC 35319 / DSM 5812 / JCM 6584 / H10) (Clostridium cellulolyticum).